The following is a 595-amino-acid chain: Transketolase-like protein 1 (595 aa).

93 to 95 (GWP) provides a ligand contact to thiamine diphosphate. Mg(2+) is bound by residues D125, N155, and I157. N155 contributes to the thiamine diphosphate binding site. The thiamine diphosphate site is built by K217, E339, and F365. The active-site Proton donor is the E339. Residues H389 and D397 each contribute to the substrate site. Position 401 (H401) interacts with thiamine diphosphate.

It belongs to the transketolase family. Homodimer. Mg(2+) serves as cofactor. Requires Ca(2+) as cofactor. The cofactor is Mn(2+). It depends on Co(2+) as a cofactor. Thiamine diphosphate is required as a cofactor. In terms of tissue distribution, not expressed in the embryonic neocortex.

The protein localises to the cytoplasm. The catalysed reaction is D-sedoheptulose 7-phosphate + D-glyceraldehyde 3-phosphate = aldehydo-D-ribose 5-phosphate + D-xylulose 5-phosphate. Functionally, catalyzes the transfer of a two-carbon ketol group from a ketose donor to an aldose acceptor, via a covalent intermediate with the cofactor thiamine pyrophosphate. The chain is Transketolase-like protein 1 from Mus musculus (Mouse).